Here is a 304-residue protein sequence, read N- to C-terminus: MARTENDTWDLASSVGATATMVAAARALATNADEPAIDDPFAAPLVRAVGVDFFTKLVDDNFDLTALDPEAAEGLTRFANGMAARTRFFDDFFLDAARAGVRQFVILASGLDARAYRLPWPAGSVVFEIDQPDVIEFKTKALADLGALPTTDRRAVAVDLRFDWPAALTEAGFDPAEPTAWIAEGLLGYLPPEAQDRLLDQIAELSAPGSRVAVEEIPAIEEEDHEEIAARMKDFSDRWRAHGFDLDFTELVFLGDRADVSSYLQGHGWKTTSMTSDELLVHNGLPRVDDDAQIGSVVYVTATR.

S-adenosyl-L-methionine-binding positions include D130 and 159–160 (DL).

The protein belongs to the UPF0677 family.

In terms of biological role, exhibits S-adenosyl-L-methionine-dependent methyltransferase activity. The polypeptide is Putative S-adenosyl-L-methionine-dependent methyltransferase MSMEG_1482/MSMEI_1446 (Mycolicibacterium smegmatis (strain ATCC 700084 / mc(2)155) (Mycobacterium smegmatis)).